Reading from the N-terminus, the 374-residue chain is MKIYYEDSLPYAAEFFAGLGDSQVFSHKDVNGELVADADVLLVRSTTKVNAELLKANQNIKYVGTATAGTNHLDKEYLRSRGLDIHSAAGCNAVAVAEYVLSALFVMAEKLDWQLTTKTVGIVGAGHVGTRLTEKLTALGIRYHLCDPPLADAGDTRDFVDMDTIMQCDIISLHVPLIEGGQYNTGHMFDAKRIGQLRKDQLLINACRGEVIDNKALLKSFESGYKLNVVLDVWENEPDIDQALVPYIALATAHIAGHTVEGKARGTEMLYQQVCEQFGFNATKKLSDYLPAPQPSIITLDETLSGQAQLSALVLSVYDIRKDSKQFKETIEQPDQFRYIRKNYSIRREFAALSVNTGNYSGSEAIYALGFNRK.

Residues serine 45 and threonine 67 each coordinate substrate. Aspartate 147 serves as a coordination point for NAD(+). The active site involves arginine 208. NAD(+) is bound at residue aspartate 232. Glutamate 237 is a catalytic residue. Histidine 254 functions as the Proton donor in the catalytic mechanism. Residue glycine 257 coordinates NAD(+).

Belongs to the D-isomer specific 2-hydroxyacid dehydrogenase family. PdxB subfamily. As to quaternary structure, homodimer.

It localises to the cytoplasm. The enzyme catalyses 4-phospho-D-erythronate + NAD(+) = (R)-3-hydroxy-2-oxo-4-phosphooxybutanoate + NADH + H(+). The protein operates within cofactor biosynthesis; pyridoxine 5'-phosphate biosynthesis; pyridoxine 5'-phosphate from D-erythrose 4-phosphate: step 2/5. In terms of biological role, catalyzes the oxidation of erythronate-4-phosphate to 3-hydroxy-2-oxo-4-phosphonooxybutanoate. The sequence is that of Erythronate-4-phosphate dehydrogenase from Pseudoalteromonas atlantica (strain T6c / ATCC BAA-1087).